Here is a 194-residue protein sequence, read N- to C-terminus: CD-NTase-associated protein 15 (194 aa).

Residues 1–73 (MRMWELLPSK…DYLKHKFCPD (73 aa)) are required for cell toxicity. 2 helical membrane-spanning segments follow: residues 15–35 (ISTIISIIVFLFFLEFLGQPV) and 43–63 (ITTITILAFIFGKYLWKYFYI).

This sequence belongs to the CBASS Cap15 membrane effector family. In terms of assembly, the beta barrel domain oligomerizes; in the presence of cyclic nucleotides (probably 3',3'-cGAMP, but the cognate CD-NTase makes at least 4 other cyclic nucleotides) higher-level oligomers are detected.

It localises to the cell inner membrane. Effector protein of a CBASS antivirus system. CBASS (cyclic oligonucleotide-based antiphage signaling system) provides immunity against bacteriophages. The CD-NTase protein (CdnB) synthesizes cyclic nucleotides in response to infection; these serve as specific second messenger signals. The signals activate a diverse range of effectors, leading to bacterial cell death and thus abortive phage infection. Causes cell death in response to 3',3'-cGAMP upon coexpression in E.coli with V.cholerae DncV; inactivating DncV prevents cell death. Upon induction in E.coli with non-cognate DncV, the cell inner membrane shrinks and separates from the cell wall with a concomitant increase in the periplasm. Binds cyclic nucleotide second messenger 3',3'-cGAMP, probably oligomerizing, and induces cell membrane shrinkage and rupture, leading to cell death. A type I CBASS system. Functionally, protects E.coli against phage infection. When the CBASS operon (cdnB-cap15) is introduced in E.coli MG1655 there is about 100-fold protection against phage T2 and about 10-fold protection against phage T5 and T6. In Escherichia albertii, this protein is CD-NTase-associated protein 15.